Consider the following 602-residue polypeptide: Glutathione-regulated potassium-efflux system protein KefB (602 aa).

13 helical membrane-spanning segments follow: residues 4 to 24 (TGLLTAVLVFLFAAVVAVPIA), 29 to 49 (IGAVLGYLIAGIAIGPWGLGF), 55 to 75 (EILHFSELGVVFLMFIIGLEL), 87 to 107 (IFGVGAGQVVITAAVLGALLY), 115 to 135 (AAVIGGVGLAMSSTAMALQLM), 152 to 172 (VLLFQDMAVIPALALIPILAG), 181 to 201 (VKIGLKIAAFAGMLIGGRYLL), 207 to 227 (YIVASGVREVFTAAALLVVLG), 230 to 250 (LFMDALGLSMALGTFIAGILL), 261 to 281 (IAIEPFKGLLLGLFFISVGMA), 296 to 318 (LGVLALVFIKSAILYGLARVFGL), 326 to 346 (FAGVLSQGGEFAFVLFSAAFS), and 356 to 376 (ALLLVVVTLSMMTTPLLMQVI). An RCK N-terminal domain is found at 400–519 (DPQVIIVGFG…NGVKDFTRET (120 aa)).

It belongs to the monovalent cation:proton antiporter 2 (CPA2) transporter (TC 2.A.37) family. KefB subfamily. As to quaternary structure, interacts with the regulatory subunit KefG.

It is found in the cell inner membrane. Functionally, pore-forming subunit of a potassium efflux system that confers protection against electrophiles. Catalyzes K(+)/H(+) antiport. The protein is Glutathione-regulated potassium-efflux system protein KefB of Yersinia pestis bv. Antiqua (strain Antiqua).